Reading from the N-terminus, the 470-residue chain is Putative multidrug resistance protein MdtD (470 aa).

At 1 to 11 (MTEFPDNTRWQ) the chain is on the periplasmic side. Residues 12-32 (LWIVAFGFFMQSLDTTIVNTA) form a helical membrane-spanning segment. The Cytoplasmic portion of the chain corresponds to 33 to 48 (LPSMAKSLGESPLHMH). Residues 49–69 (MVVVSYVLTVAVMLPASGWLA) traverse the membrane as a helical segment. Residues 70 to 76 (DKIGVRN) are Periplasmic-facing. A helical membrane pass occupies residues 77–97 (IFFAAIVLFTLGSLFCALSGT). Residues 98 to 101 (LNQL) are Cytoplasmic-facing. A helical membrane pass occupies residues 102 to 124 (VLARVLQGVGGAMMVPVGRLTVM). Residues 125 to 137 (KIVPRAQYMAAMT) are Periplasmic-facing. The helical transmembrane segment at 138–158 (FVALPGQIGPLLGPALGGVLV) threads the bilayer. Residues 159–164 (EYASWH) lie on the Cytoplasmic side of the membrane. The helical transmembrane segment at 165–185 (WIFLINIPVGIVGAMATFMLM) threads the bilayer. The Periplasmic portion of the chain corresponds to 186–196 (PNYTIETRRFD). A helical membrane pass occupies residues 197–217 (LPGFLLLAIGMAVLTLALDGS). At 218-224 (KSMGISP) the chain is on the cytoplasmic side. The helical transmembrane segment at 225–245 (WTLAGLAAGGAAAILLYLFHA) threads the bilayer. At 246–262 (KKNSGALFSLRLFRTPT) the chain is on the periplasmic side. The chain crosses the membrane as a helical span at residues 263–283 (FSLGLLGSFAGRIGSGMLPFM). Topologically, residues 284–285 (TP) are cytoplasmic. A helical transmembrane segment spans residues 286–306 (VFLQIGLGFSPFHAGLMMIPM). The Periplasmic portion of the chain corresponds to 307–341 (VLGSMGMKRIVVQIVNRFGYRRVLVATTLGLALVS). The chain crosses the membrane as a helical span at residues 342–362 (LLFMSVALLGWYYLLPLVLLL). Over 363–395 (QGMVNSARFSSMNTLTLKDLPDTLASSGNSLLS) the chain is Cytoplasmic. The chain crosses the membrane as a helical span at residues 396–416 (MIMQLSMSIGVTIAGMLLGMF). The Periplasmic segment spans residues 417-430 (GQQHIGIDSSATHH). The chain crosses the membrane as a helical span at residues 431-451 (VFMYTWLCMAVIIALPAIIFA). The Cytoplasmic segment spans residues 452–470 (RVPNDTQQNMVISRRKRSL).

This sequence belongs to the major facilitator superfamily. TCR/Tet family.

The protein resides in the cell inner membrane. The polypeptide is Putative multidrug resistance protein MdtD (Salmonella typhi).